The sequence spans 316 residues: uncharacterized protein (316 aa).

Belongs to the chlamydial CPn_0441/CT_007/TC_0275 family.

This is an uncharacterized protein from Chlamydia muridarum (strain MoPn / Nigg).